The sequence spans 64 residues: DNA gyrase inhibitor YacG (64 aa).

Zn(2+) contacts are provided by C9, C12, C28, and C32.

The protein belongs to the DNA gyrase inhibitor YacG family. In terms of assembly, interacts with GyrB. The cofactor is Zn(2+).

Its function is as follows. Inhibits all the catalytic activities of DNA gyrase by preventing its interaction with DNA. Acts by binding directly to the C-terminal domain of GyrB, which probably disrupts DNA binding by the gyrase. The chain is DNA gyrase inhibitor YacG from Enterobacter sp. (strain 638).